The primary structure comprises 263 residues: uncharacterized protein (263 aa).

An ATP-binding site is contributed by 16–23; sequence AKGGTGKT.

The protein to M.jannaschii MJ0547 and MJ0169.

This is an uncharacterized protein from Methanocaldococcus jannaschii (strain ATCC 43067 / DSM 2661 / JAL-1 / JCM 10045 / NBRC 100440) (Methanococcus jannaschii).